We begin with the raw amino-acid sequence, 148 residues long: Lysozyme-like protein 6 (148 aa).

Residues 1–19 (MTKALLIYLVSSFLALNQA) form the signal peptide. The 129-residue stretch at 20–148 (SLISRCDLAQ…FYWLTGCRLR (129 aa)) folds into the C-type lysozyme domain. 4 disulfide bridges follow: cysteine 25–cysteine 145, cysteine 49–cysteine 133, cysteine 83–cysteine 98, and cysteine 94–cysteine 112. Catalysis depends on residues glutamate 54 and aspartate 71.

This sequence belongs to the glycosyl hydrolase 22 family. As to quaternary structure, monomer. As to expression, expressed in testis, epididymis and spermatozoa (at protein level). Expressed in late-stage spermatocytes and round spermatids.

Its subcellular location is the secreted. It localises to the cell surface. The protein resides in the cell projection. It is found in the cilium. The protein localises to the flagellum. It carries out the reaction Hydrolysis of (1-&gt;4)-beta-linkages between N-acetylmuramic acid and N-acetyl-D-glucosamine residues in a peptidoglycan and between N-acetyl-D-glucosamine residues in chitodextrins.. Functionally, may be involved sperm-egg plasma membrane adhesion and fusion during fertilization. Exhibits bacteriolytic activity in vitro against Micrococcus luteus and Staphylococcus aureus. Shows weak bacteriolytic activity against Gram-positive bacteria at physiological pH. Bacteriolytic activity is pH-dependent, with a maximum at around pH 5.6. The protein is Lysozyme-like protein 6 (LYZL6) of Homo sapiens (Human).